The sequence spans 181 residues: UPF0302 protein LMHCC_0635 (181 aa).

This sequence belongs to the UPF0302 family.

This chain is UPF0302 protein LMHCC_0635, found in Listeria monocytogenes serotype 4a (strain HCC23).